The sequence spans 575 residues: Phosphoenolpyruvate-protein phosphotransferase (575 aa).

The active-site Tele-phosphohistidine intermediate is His-191. Phosphoenolpyruvate is bound by residues Arg-298 and Arg-334. Glu-435 and Asp-459 together coordinate Mg(2+). Phosphoenolpyruvate is bound by residues Asn-458–Asp-459 and Arg-469. The active-site Proton donor is the Cys-506.

This sequence belongs to the PEP-utilizing enzyme family. In terms of assembly, homodimer. Requires Mg(2+) as cofactor.

The protein resides in the cytoplasm. It catalyses the reaction L-histidyl-[protein] + phosphoenolpyruvate = N(pros)-phospho-L-histidyl-[protein] + pyruvate. General (non sugar-specific) component of the phosphoenolpyruvate-dependent sugar phosphotransferase system (sugar PTS). This major carbohydrate active-transport system catalyzes the phosphorylation of incoming sugar substrates concomitantly with their translocation across the cell membrane. Enzyme I transfers the phosphoryl group from phosphoenolpyruvate (PEP) to the phosphoryl carrier protein (HPr). The protein is Phosphoenolpyruvate-protein phosphotransferase (ptsI) of Lactococcus lactis subsp. lactis (strain IL1403) (Streptococcus lactis).